Reading from the N-terminus, the 299-residue chain is Sulfate adenylyltransferase subunit 2 (299 aa).

It belongs to the PAPS reductase family. CysD subfamily. As to quaternary structure, sulfate-activating enzymes, NodP and NodQ, may be physically associated.

The enzyme catalyses sulfate + ATP + H(+) = adenosine 5'-phosphosulfate + diphosphate. Proposed to provide activated sulfate for transfer to nod factor. This is Sulfate adenylyltransferase subunit 2 (nodP) from Rhizobium sp. (strain BR816).